A 322-amino-acid polypeptide reads, in one-letter code: HPr kinase/phosphorylase (322 aa).

Active-site residues include histidine 146 and lysine 167. ATP is bound at residue 161 to 168 (GDSGLGKS). Mg(2+) is bound at residue serine 168. The Proton acceptor; for phosphorylation activity. Proton donor; for dephosphorylation activity role is filled by aspartate 185. Residues 209–218 (LEVRGLGLLD) are important for the catalytic mechanism of both phosphorylation and dephosphorylation. Glutamate 210 is a binding site for Mg(2+). The active site involves arginine 250. The important for the catalytic mechanism of dephosphorylation stretch occupies residues 271–276 (QVAAGR).

This sequence belongs to the HPrK/P family. Homohexamer. It depends on Mg(2+) as a cofactor.

It catalyses the reaction [HPr protein]-L-serine + ATP = [HPr protein]-O-phospho-L-serine + ADP + H(+). It carries out the reaction [HPr protein]-O-phospho-L-serine + phosphate + H(+) = [HPr protein]-L-serine + diphosphate. Catalyzes the ATP- as well as the pyrophosphate-dependent phosphorylation of a specific serine residue in HPr, a phosphocarrier protein of the phosphoenolpyruvate-dependent sugar phosphotransferase system (PTS). HprK/P also catalyzes the pyrophosphate-producing, inorganic phosphate-dependent dephosphorylation (phosphorolysis) of seryl-phosphorylated HPr (P-Ser-HPr). This is HPr kinase/phosphorylase from Burkholderia cenocepacia (strain HI2424).